A 310-amino-acid polypeptide reads, in one-letter code: Phytoene synthase 2, chloroplastic (310 aa).

The N-terminal 25 residues, 1-25 (DPDIVLPGNLGLLSEAYDRCGEVCA), are a transit peptide targeting the chloroplast.

This sequence belongs to the phytoene/squalene synthase family. In terms of assembly, monomer.

The protein resides in the plastid. It localises to the chloroplast. The enzyme catalyses 2 (2E,6E,10E)-geranylgeranyl diphosphate = 15-cis-phytoene + 2 diphosphate. It functions in the pathway carotenoid biosynthesis; phytoene biosynthesis; all-trans-phytoene from geranylgeranyl diphosphate: step 1/1. Functionally, catalyzes the reaction from prephytoene diphosphate to phytoene. The sequence is that of Phytoene synthase 2, chloroplastic (PSY2) from Solanum lycopersicum (Tomato).